The primary structure comprises 298 residues: Tyrosine recombinase XerD (298 aa).

One can recognise a Core-binding (CB) domain in the interval 2–87 (KQELARIEQF…AVRRLFQYLY (86 aa)). Positions 108 to 292 (RLPKDLSEAQ…ATERLRQLHQ (185 aa)) constitute a Tyr recombinase domain. Catalysis depends on residues Arg-148, Lys-172, His-244, Arg-247, and His-270. Tyr-279 (O-(3'-phospho-DNA)-tyrosine intermediate) is an active-site residue.

This sequence belongs to the 'phage' integrase family. XerD subfamily. Forms a cyclic heterotetrameric complex composed of two molecules of XerC and two molecules of XerD, in which XerC interacts with XerD via its C-terminal region, XerD interacts with XerC via its C-terminal region and so on.

Its subcellular location is the cytoplasm. With respect to regulation, ftsK may regulate the catalytic switch between XerC and XerD in the heterotetrameric complex during the two steps of the recombination process. Site-specific tyrosine recombinase, which acts by catalyzing the cutting and rejoining of the recombining DNA molecules. Binds cooperatively to specific DNA consensus sequences that are separated from XerC binding sites by a short central region, forming the heterotetrameric XerC-XerD complex that recombines DNA substrates. The complex is essential to convert dimers of the bacterial chromosome into monomers to permit their segregation at cell division. It also contributes to the segregational stability of plasmids. In the complex XerD specifically exchanges the bottom DNA strands. The polypeptide is Tyrosine recombinase XerD (Shigella flexneri).